The primary structure comprises 244 residues: Probable phosphatase NT01CX_1282 (244 aa).

Residues histidine 8, histidine 10, histidine 16, histidine 41, glutamate 74, histidine 102, histidine 132, aspartate 193, and histidine 195 each contribute to the Zn(2+) site.

This sequence belongs to the PHP family. Zn(2+) serves as cofactor.

The chain is Probable phosphatase NT01CX_1282 from Clostridium novyi (strain NT).